The following is a 131-amino-acid chain: Steroid Delta-isomerase (131 aa).

The Proton donor role is filled by Tyr16. Asp40 acts as the Proton acceptor in catalysis. Asp103 contacts substrate.

Homodimer.

It catalyses the reaction a 3-oxo-Delta(5)-steroid = a 3-oxo-Delta(4)-steroid. In Pseudomonas putida (Arthrobacter siderocapsulatus), this protein is Steroid Delta-isomerase (ksi).